We begin with the raw amino-acid sequence, 68 residues long: Large ribosomal subunit protein bL35 (68 aa).

This sequence belongs to the bacterial ribosomal protein bL35 family.

The polypeptide is Large ribosomal subunit protein bL35 (Wolbachia pipientis subsp. Culex pipiens (strain wPip)).